Here is a 401-residue protein sequence, read N- to C-terminus: Mannonate dehydratase (401 aa).

The protein belongs to the mannonate dehydratase family. The cofactor is Fe(2+). Mn(2+) is required as a cofactor.

It carries out the reaction D-mannonate = 2-dehydro-3-deoxy-D-gluconate + H2O. It participates in carbohydrate metabolism; pentose and glucuronate interconversion. Catalyzes the dehydration of D-mannonate. The polypeptide is Mannonate dehydratase (Brucella canis (strain ATCC 23365 / NCTC 10854 / RM-666)).